Consider the following 673-residue polypeptide: NADH-quinone oxidoreductase chain 3 (673 aa).

The 2Fe-2S ferredoxin-type domain maps to 5-90 (RKIKIDDTII…PSEIRTNSPM (86 aa)). [2Fe-2S] cluster contacts are provided by cysteine 37, cysteine 48, cysteine 51, and cysteine 66. The 40-residue stretch at 90-129 (MVKKAREGVMEFLLINHPLDCPICDQGGECDLQDQAMAYG) folds into the 4Fe-4S His(Cys)3-ligated-type domain. [4Fe-4S] cluster-binding residues include histidine 106, cysteine 110, cysteine 113, cysteine 119, cysteine 158, cysteine 161, cysteine 164, and cysteine 208. One can recognise a 4Fe-4S Mo/W bis-MGD-type domain in the interval 227–283 (LTKTESIDVMDALGSSIRIDTKGREVMRILPRNHDGVNEEWISDKTRFVWDGLRRQR).

This sequence belongs to the complex I 75 kDa subunit family. NDH-1 is composed of at least 14 different subunits, Nqo1 to Nqo14. The complex has a L-shaped structure, with the hydrophobic arm (subunits Nqo7, Nqo8, Nqo10 to Nqo14) embedded in the inner membrane and the hydrophilic peripheral arm (subunits Nqo1 to Nqo6, Nqo9) protruding into the bacterial cytoplasm. The hydrophilic domain contains all the redox centers. Requires [2Fe-2S] cluster as cofactor. [4Fe-4S] cluster serves as cofactor.

It is found in the cell inner membrane. It carries out the reaction a quinone + NADH + 5 H(+)(in) = a quinol + NAD(+) + 4 H(+)(out). Functionally, NDH-1 shuttles electrons from NADH, via FMN and iron-sulfur (Fe-S) centers, to quinones in the respiratory chain. The immediate electron acceptor for the enzyme in this species is believed to be ubiquinone. Couples the redox reaction to proton translocation (for every two electrons transferred, four hydrogen ions are translocated across the cytoplasmic membrane), and thus conserves the redox energy in a proton gradient. The protein is NADH-quinone oxidoreductase chain 3 of Paracoccus denitrificans.